The following is a 203-amino-acid chain: Urease accessory protein UreG (203 aa).

14–21 (GPVGSGKT) is a GTP binding site.

This sequence belongs to the SIMIBI class G3E GTPase family. UreG subfamily. As to quaternary structure, homodimer. UreD, UreF and UreG form a complex that acts as a GTP-hydrolysis-dependent molecular chaperone, activating the urease apoprotein by helping to assemble the nickel containing metallocenter of UreC. The UreE protein probably delivers the nickel.

The protein resides in the cytoplasm. Functionally, facilitates the functional incorporation of the urease nickel metallocenter. This process requires GTP hydrolysis, probably effectuated by UreG. In Rhizobium etli (strain ATCC 51251 / DSM 11541 / JCM 21823 / NBRC 15573 / CFN 42), this protein is Urease accessory protein UreG.